Consider the following 856-residue polypeptide: TPR repeat-containing protein TP_0123 (856 aa).

TPR repeat units lie at residues 107–140, 523–556, and 603–636; these read YAAVRCVRALYQTLDTYEKQVKEFRILMDVVADD, YRTFSLLGFLTIGQSKFEDALVYFGYALDDAEQL, and TVSLFMQGRISLSLGEYAQARRCFDEAADFALQY.

This Treponema pallidum (strain Nichols) protein is TPR repeat-containing protein TP_0123.